A 333-amino-acid polypeptide reads, in one-letter code: Fe-S cluster assembly protein dre2 (333 aa).

The segment at 1 to 29 (MSPITLDLTSDFNPANTTGAGSSSSQPRT) is disordered. Positions 7–28 (DLTSDFNPANTTGAGSSSSQPR) are enriched in polar residues. Positions 23 to 158 (SSSQPRTLLV…KPDYAEEEAV (136 aa)) are N-terminal SAM-like domain. The segment at 159 to 225 (PLRFGLKRKT…EDTLLTEADL (67 aa)) is linker. [2Fe-2S] cluster contacts are provided by Cys-235, Cys-246, Cys-249, and Cys-251. Positions 235 to 251 (CQPKPGKKRRACKDCTC) are fe-S binding site A. 4 residues coordinate [4Fe-4S] cluster: Cys-296, Cys-299, Cys-307, and Cys-310. 2 short sequence motifs (cx2C motif) span residues 296 to 299 (CGSC) and 307 to 310 (CAGC). The interval 296 to 310 (CGSCALGDAFRCAGC) is fe-S binding site B.

This sequence belongs to the anamorsin family. As to quaternary structure, monomer. Interacts with tah18. Interacts with mia40. It depends on [2Fe-2S] cluster as a cofactor. Requires [4Fe-4S] cluster as cofactor.

It localises to the cytoplasm. It is found in the mitochondrion intermembrane space. Functionally, component of the cytosolic iron-sulfur (Fe-S) protein assembly (CIA) machinery required for the maturation of extramitochondrial Fe-S proteins. Part of an electron transfer chain functioning in an early step of cytosolic Fe-S biogenesis, facilitating the de novo assembly of a [4Fe-4S] cluster on the scaffold complex cfd1-nbp35. Electrons are transferred to dre2 from NADPH via the FAD- and FMN-containing protein tah18. Tah18-dre2 are also required for the assembly of the diferric tyrosyl radical cofactor of ribonucleotide reductase (RNR), probably by providing electrons for reduction during radical cofactor maturation in the catalytic small subunit rnr2. The polypeptide is Fe-S cluster assembly protein dre2 (Neurospora crassa (strain ATCC 24698 / 74-OR23-1A / CBS 708.71 / DSM 1257 / FGSC 987)).